A 457-amino-acid polypeptide reads, in one-letter code: tRNA-2-methylthio-N(6)-dimethylallyladenosine synthase (457 aa).

The MTTase N-terminal domain maps to 3–120 (KKVYVKTFGC…LPQMIDARRA (118 aa)). Cys-12, Cys-49, Cys-83, Cys-157, Cys-161, and Cys-164 together coordinate [4Fe-4S] cluster. Residues 143 to 377 (RVEGPSAFVS…QATIEENVAR (235 aa)) form the Radical SAM core domain. The region spanning 380–447 (QSMVGKVERI…PHSLRGELVI (68 aa)) is the TRAM domain.

Belongs to the methylthiotransferase family. MiaB subfamily. Monomer. The cofactor is [4Fe-4S] cluster.

The protein resides in the cytoplasm. It catalyses the reaction N(6)-dimethylallyladenosine(37) in tRNA + (sulfur carrier)-SH + AH2 + 2 S-adenosyl-L-methionine = 2-methylsulfanyl-N(6)-dimethylallyladenosine(37) in tRNA + (sulfur carrier)-H + 5'-deoxyadenosine + L-methionine + A + S-adenosyl-L-homocysteine + 2 H(+). Its function is as follows. Catalyzes the methylthiolation of N6-(dimethylallyl)adenosine (i(6)A), leading to the formation of 2-methylthio-N6-(dimethylallyl)adenosine (ms(2)i(6)A) at position 37 in tRNAs that read codons beginning with uridine. The sequence is that of tRNA-2-methylthio-N(6)-dimethylallyladenosine synthase from Burkholderia cenocepacia (strain ATCC BAA-245 / DSM 16553 / LMG 16656 / NCTC 13227 / J2315 / CF5610) (Burkholderia cepacia (strain J2315)).